Here is a 382-residue protein sequence, read N- to C-terminus: Dual-specificity RNA methyltransferase RlmN (382 aa).

The Proton acceptor role is filled by Glu-94. The Radical SAM core domain occupies 100-336 (EANRGTLCVS…NTITRKTRGD (237 aa)). Cys-107 and Cys-342 are disulfide-bonded. Cys-114, Cys-118, and Cys-121 together coordinate [4Fe-4S] cluster. S-adenosyl-L-methionine is bound by residues 168–169 (GE), Ser-200, 222–224 (SLH), and Asn-299. Cys-342 acts as the S-methylcysteine intermediate in catalysis.

The protein belongs to the radical SAM superfamily. RlmN family. Requires [4Fe-4S] cluster as cofactor.

The protein localises to the cytoplasm. It carries out the reaction adenosine(2503) in 23S rRNA + 2 reduced [2Fe-2S]-[ferredoxin] + 2 S-adenosyl-L-methionine = 2-methyladenosine(2503) in 23S rRNA + 5'-deoxyadenosine + L-methionine + 2 oxidized [2Fe-2S]-[ferredoxin] + S-adenosyl-L-homocysteine. The catalysed reaction is adenosine(37) in tRNA + 2 reduced [2Fe-2S]-[ferredoxin] + 2 S-adenosyl-L-methionine = 2-methyladenosine(37) in tRNA + 5'-deoxyadenosine + L-methionine + 2 oxidized [2Fe-2S]-[ferredoxin] + S-adenosyl-L-homocysteine. Its function is as follows. Specifically methylates position 2 of adenine 2503 in 23S rRNA and position 2 of adenine 37 in tRNAs. m2A2503 modification seems to play a crucial role in the proofreading step occurring at the peptidyl transferase center and thus would serve to optimize ribosomal fidelity. The polypeptide is Dual-specificity RNA methyltransferase RlmN (Legionella pneumophila (strain Lens)).